The sequence spans 63 residues: 2-hydroxymuconate tautomerase (63 aa).

P2 acts as the Proton acceptor; via imino nitrogen in catalysis.

The protein belongs to the 4-oxalocrotonate tautomerase family. Homohexamer.

The enzyme catalyses (2Z,4E)-2-hydroxyhexa-2,4-dienedioate = (3E)-2-oxohex-3-enedioate. It functions in the pathway xenobiotic degradation; toluene degradation. Functionally, catalyzes the ketonization of 2-hydroxymuconate stereoselectively to yield 2-oxo-3-hexenedioate. In Pseudomonas sp. (strain CF600), this protein is 2-hydroxymuconate tautomerase (dmpI).